The sequence spans 152 residues: Ribosome maturation factor RimP (152 aa).

This sequence belongs to the RimP family.

It is found in the cytoplasm. Functionally, required for maturation of 30S ribosomal subunits. The polypeptide is Ribosome maturation factor RimP (Alteromonas mediterranea (strain DSM 17117 / CIP 110805 / LMG 28347 / Deep ecotype)).